Reading from the N-terminus, the 423-residue chain is Keratin, type I cytoskeletal 18 (423 aa).

S2 bears the N-acetylserine mark. A head region spans residues 2–71; it reads SFTTRSTTFS…GLAGMGGIQT (70 aa). 4 positions are modified to phosphoserine: S7, S11, S16, and S19. S31 and S32 each carry phosphoserine; alternate. O-linked (GlcNAc) serine; alternate glycosylation is found at S31 and S32. S35 carries the phosphoserine modification. Phosphotyrosine is present on Y37. S43 is modified (phosphoserine). R46 carries the omega-N-methylarginine modification. Residue S50 is modified to Phosphoserine; alternate. Residue S50 is glycosylated (O-linked (GlcNAc) serine; alternate). S52 is modified (phosphoserine; by MAPKAPK2 and MAPKAPK3). 2 positions are modified to phosphoserine: S57 and S60. Residues 62–366 are necessary for interaction with PNN; the sequence is GLAGMGGIQT…EALLNIKVKL (305 aa). The interaction with TRADD stretch occupies residues 69 to 121; the sequence is IQTEKETMQDLNDRLASYLDKVKSLETENRRLESKIREHLEKKGPQGVRDWGH. The segment at 72 to 107 is coil 1A; the sequence is EKETMQDLNDRLASYLDKVKSLETENRRLESKIREH. The IF rod domain maps to 72–384; that stretch reads EKETMQDLND…RLLEDGEDFS (313 aa). K73 is covalently cross-linked (Glycyl lysine isopeptide (Lys-Gly) (interchain with G-Cter in SUMO2)). A phosphoserine mark is found at S85 and S92. A linker 1 region spans residues 108–125; it reads LEKKGPQGVRDWGHYFKI. K124 carries the post-translational modification N6-acetyllysine. The tract at residues 126–217 is coil 1B; that stretch reads IEDLRAQIFA…KNHEEEVQGL (92 aa). 2 positions are modified to phosphoserine: S137 and S170. A linker 12 region spans residues 218 to 241; sequence EAQIASSGLTVEVDAPKSQDLSKI. Positions 236-384 are interaction with DNAJB6; sequence QDLSKIMADI…RLLEDGEDFS (149 aa). K240 is covalently cross-linked (Glycyl lysine isopeptide (Lys-Gly) (interchain with G-Cter in SUMO2)). Positions 242 to 380 are coil 2; that stretch reads MADIRAQYEA…ATYRRLLEDG (139 aa). Position 295 is a phosphothreonine (T295). S316 bears the Phosphoserine mark. Glycyl lysine isopeptide (Lys-Gly) (interchain with G-Cter in SUMO2) cross-links involve residues K363 and K365. The segment at 381 to 423 is tail; it reads EDFSLNDALDSSNSMQTVQKTTTRKIVDGRVVSETNDTRVLRH. Phosphoserine is present on residues S384, S391, S392, and S394. The residue at position 397 (T397) is a Phosphothreonine.

Belongs to the intermediate filament family. As to quaternary structure, heterotetramer of two type I and two type II keratins. KRT18 associates with KRT8. Interacts with PLEC isoform 1C, when in a heterodimer with KRT8. Interacts with PNN and mutated CFTR. Interacts with YWHAE, YWHAH and YWHAZ only when phosphorylated. Interacts with the thrombin-antithrombin complex. Interacts with DNAJB6, TCHP and TRADD. Interacts with FAM83H. Interacts with EPPK1. Interacts with PKP1 and PKP2. Phosphorylation increases by IL-6. In terms of processing, proteolytically cleaved by caspases during epithelial cell apoptosis. Cleavage occurs at Asp-231 by either caspase-3, caspas-6 or caspase-7. Post-translationally, O-GlcNAcylation increases solubility, and decreases stability by inducing proteasomal degradation. Expressed in endoderm, intestinal epithelial cells and in most extraembryonic tissues.

Its subcellular location is the nucleus matrix. The protein localises to the cytoplasm. It is found in the perinuclear region. The protein resides in the nucleus. It localises to the nucleolus. Functionally, when phosphorylated, plays a role in filament reorganization. Involved in the delivery of mutated CFTR to the plasma membrane. Involved in the uptake of thrombin-antithrombin complexes by hepatic cells. Together with KRT8, is involved in interleukin-6 (IL-6)-mediated barrier protection. The protein is Keratin, type I cytoskeletal 18 (Krt18) of Mus musculus (Mouse).